We begin with the raw amino-acid sequence, 228 residues long: Ribose-5-phosphate isomerase A (228 aa).

Residues 28 to 31 (TGST), 84 to 87 (DGAD), and 97 to 100 (KGGG) each bind substrate. The active-site Proton acceptor is glutamate 106. Position 124 (lysine 124) interacts with substrate.

This sequence belongs to the ribose 5-phosphate isomerase family. In terms of assembly, homodimer.

It carries out the reaction aldehydo-D-ribose 5-phosphate = D-ribulose 5-phosphate. It participates in carbohydrate degradation; pentose phosphate pathway; D-ribose 5-phosphate from D-ribulose 5-phosphate (non-oxidative stage): step 1/1. Its function is as follows. Catalyzes the reversible conversion of ribose-5-phosphate to ribulose 5-phosphate. In Levilactobacillus brevis (strain ATCC 367 / BCRC 12310 / CIP 105137 / JCM 1170 / LMG 11437 / NCIMB 947 / NCTC 947) (Lactobacillus brevis), this protein is Ribose-5-phosphate isomerase A.